We begin with the raw amino-acid sequence, 251 residues long: Probable transcriptional regulatory protein SYO3AOP1_0685 (251 aa).

This sequence belongs to the TACO1 family.

The protein resides in the cytoplasm. This chain is Probable transcriptional regulatory protein SYO3AOP1_0685, found in Sulfurihydrogenibium sp. (strain YO3AOP1).